Reading from the N-terminus, the 421-residue chain is MDKLLIRGGRPLMGEVTISGAKNAALPELCAALLCPEPLTLANVPRLQDVGTTLKVLRHLGVEAERSAVLPDQVRLDATRITTREAPYELVKTMRASILVLGPLLARFGEARVSLPGGCAIGSRPVDQHIKGLQAMGAQIVVEHGYIVARAERLKGARITTDMVTVTGTENLLMAATLADGETVLENAAQEPEITDLAELLIAMGAQIEGQGTHRIRIQGVERLHAPAVPHQIIPDRIETGTFLCAVAATGGDVTLRRTRADHLDAVLDKLREACTELECGADWIRVRAAGRPKGVNLRTSEYPAFPTDMQAQFMALNCIAQGTSRVIETIFENRFMHVNELVRLGAHIAVDGHTAIVEGIARLSGATVMATDLRASASLVIAGLVAEGETTVERIYHLDRGYDQMETKLRGIGADIERIK.

22–23 (KN) is a phosphoenolpyruvate binding site. Residue R95 coordinates UDP-N-acetyl-alpha-D-glucosamine. The Proton donor role is filled by C119. C119 is subject to 2-(S-cysteinyl)pyruvic acid O-phosphothioketal. UDP-N-acetyl-alpha-D-glucosamine contacts are provided by residues 124–128 (RPVDQ), D309, and I331.

The protein belongs to the EPSP synthase family. MurA subfamily.

It localises to the cytoplasm. It catalyses the reaction phosphoenolpyruvate + UDP-N-acetyl-alpha-D-glucosamine = UDP-N-acetyl-3-O-(1-carboxyvinyl)-alpha-D-glucosamine + phosphate. It functions in the pathway cell wall biogenesis; peptidoglycan biosynthesis. In terms of biological role, cell wall formation. Adds enolpyruvyl to UDP-N-acetylglucosamine. In Leptothrix cholodnii (strain ATCC 51168 / LMG 8142 / SP-6) (Leptothrix discophora (strain SP-6)), this protein is UDP-N-acetylglucosamine 1-carboxyvinyltransferase.